A 234-amino-acid polypeptide reads, in one-letter code: Peptidase E (234 aa).

Catalysis depends on charge relay system residues serine 123, aspartate 138, and histidine 160.

It belongs to the peptidase S51 family.

Its subcellular location is the cytoplasm. It catalyses the reaction Dipeptidase E catalyzes the hydrolysis of dipeptides Asp-|-Xaa. It does not act on peptides with N-terminal Glu, Asn or Gln, nor does it cleave isoaspartyl peptides.. Its function is as follows. Hydrolyzes dipeptides containing N-terminal aspartate residues. May play a role in allowing the cell to use peptide aspartate to spare carbon otherwise required for the synthesis of the aspartate family of amino acids. This is Peptidase E from Actinobacillus pleuropneumoniae serotype 7 (strain AP76).